The sequence spans 475 residues: Dihydrolipoyl dehydrogenase (475 aa).

FAD is bound by residues 36 to 45 (ERYSTLGGVC), Lys54, and Gly117. Cys45 and Cys50 are oxidised to a cystine. NAD(+)-binding positions include 182–186 (GGGII), Glu205, Val238, and 270–273 (AIGR). Positions 313 and 321 each coordinate FAD. His445 (proton acceptor) is an active-site residue.

The protein belongs to the class-I pyridine nucleotide-disulfide oxidoreductase family. FAD serves as cofactor.

The protein resides in the cytoplasm. The catalysed reaction is N(6)-[(R)-dihydrolipoyl]-L-lysyl-[protein] + NAD(+) = N(6)-[(R)-lipoyl]-L-lysyl-[protein] + NADH + H(+). Its function is as follows. The branched-chain alpha-keto dehydrogenase complex catalyzes the overall conversion of alpha-keto acids to acyl-CoA and CO(2). It contains multiple copies of 3 enzymatic components: branched-chain alpha-keto acid decarboxylase (E1), lipoamide acyltransferase (E2) and lipoamide dehydrogenase (E3). The protein is Dihydrolipoyl dehydrogenase (lpd) of Vibrio parahaemolyticus serotype O3:K6 (strain RIMD 2210633).